Here is a 307-residue protein sequence, read N- to C-terminus: Ribosomal protein uL3 glutamine methyltransferase (307 aa).

The protein belongs to the protein N5-glutamine methyltransferase family. PrmB subfamily.

The enzyme catalyses L-glutaminyl-[ribosomal protein uL3] + S-adenosyl-L-methionine = N(5)-methyl-L-glutaminyl-[ribosomal protein uL3] + S-adenosyl-L-homocysteine + H(+). Its function is as follows. Methylates large ribosomal subunit protein uL3 on a specific glutamine residue. The sequence is that of Ribosomal protein uL3 glutamine methyltransferase from Burkholderia pseudomallei (strain K96243).